An 891-amino-acid polypeptide reads, in one-letter code: Nitrate reductase [NAD(P)H] (891 aa).

The interval 1-78 (MAASVEYNRQ…VKDPRDEATS (78 aa)) is disordered. A compositionally biased stretch (basic and acidic residues) spans 63–76 (LDVEPSVKDPRDEA). Residue C168 coordinates Mo-molybdopterin. Positions 515-590 (SAQFTMSEVR…LEMYRVGELI (76 aa)) constitute a Cytochrome b5 heme-binding domain. Residues H550 and H573 each coordinate heme. In terms of domain architecture, FAD-binding FR-type spans 630 to 742 (REKVRCRLVD…KGPVGHIEYA (113 aa)). FAD is bound by residues 682 to 685 (RAYT), 699 to 703 (LIKIY), F704, F711, 716 to 718 (LMS), and T769.

It belongs to the nitrate reductase family. As to quaternary structure, homodimer. It depends on FAD as a cofactor. Heme serves as cofactor. The cofactor is Mo-molybdopterin.

It catalyses the reaction nitrite + NAD(+) + H2O = nitrate + NADH + H(+). The catalysed reaction is nitrite + NADP(+) + H2O = nitrate + NADPH + H(+). Its function is as follows. Nitrate reductase is a key enzyme involved in the first step of nitrate assimilation in plants, fungi and bacteria. This is Nitrate reductase [NAD(P)H] (NAR-7) from Hordeum vulgare (Barley).